The primary structure comprises 322 residues: 4-hydroxy-3-methylbut-2-enyl diphosphate reductase (322 aa).

Cys-15 provides a ligand contact to [4Fe-4S] cluster. (2E)-4-hydroxy-3-methylbut-2-enyl diphosphate is bound by residues His-44 and His-77. Dimethylallyl diphosphate contacts are provided by His-44 and His-77. Residues His-44 and His-77 each coordinate isopentenyl diphosphate. A [4Fe-4S] cluster-binding site is contributed by Cys-99. His-127 lines the (2E)-4-hydroxy-3-methylbut-2-enyl diphosphate pocket. His-127 contacts dimethylallyl diphosphate. Residue His-127 coordinates isopentenyl diphosphate. Residue Glu-129 is the Proton donor of the active site. Thr-168 contributes to the (2E)-4-hydroxy-3-methylbut-2-enyl diphosphate binding site. Cys-198 lines the [4Fe-4S] cluster pocket. (2E)-4-hydroxy-3-methylbut-2-enyl diphosphate contacts are provided by Ser-226, Ser-227, Asn-228, and Ser-270. Residues Ser-226, Ser-227, Asn-228, and Ser-270 each contribute to the dimethylallyl diphosphate site. Isopentenyl diphosphate contacts are provided by Ser-226, Ser-227, Asn-228, and Ser-270.

This sequence belongs to the IspH family. [4Fe-4S] cluster serves as cofactor.

It carries out the reaction isopentenyl diphosphate + 2 oxidized [2Fe-2S]-[ferredoxin] + H2O = (2E)-4-hydroxy-3-methylbut-2-enyl diphosphate + 2 reduced [2Fe-2S]-[ferredoxin] + 2 H(+). It catalyses the reaction dimethylallyl diphosphate + 2 oxidized [2Fe-2S]-[ferredoxin] + H2O = (2E)-4-hydroxy-3-methylbut-2-enyl diphosphate + 2 reduced [2Fe-2S]-[ferredoxin] + 2 H(+). It functions in the pathway isoprenoid biosynthesis; dimethylallyl diphosphate biosynthesis; dimethylallyl diphosphate from (2E)-4-hydroxy-3-methylbutenyl diphosphate: step 1/1. It participates in isoprenoid biosynthesis; isopentenyl diphosphate biosynthesis via DXP pathway; isopentenyl diphosphate from 1-deoxy-D-xylulose 5-phosphate: step 6/6. Its function is as follows. Catalyzes the conversion of 1-hydroxy-2-methyl-2-(E)-butenyl 4-diphosphate (HMBPP) into a mixture of isopentenyl diphosphate (IPP) and dimethylallyl diphosphate (DMAPP). Acts in the terminal step of the DOXP/MEP pathway for isoprenoid precursor biosynthesis. The chain is 4-hydroxy-3-methylbut-2-enyl diphosphate reductase from Neisseria meningitidis serogroup C (strain 053442).